A 524-amino-acid chain; its full sequence is MPLLDGDLEGSGKHSSRKVDSPFGPGSPSKGFFSRGPQPRPPSPMSAPVRPKTSPGSPKTVFPFSYQESPPRSPRRMSFSGIFRSSSKESSPNSNPATSPGGIRFFSRSRKTSGLSSSPSTPTQVTKQHTFPLESYKHEPERLENRIYASSSPPDTGQRFCPSSFQSPTRPPLASPTHYAPSKAAALAAALGPAEAGMLEKLEFEDEVEDSESGVYMRFMRSHKCYDIVPTSSKLVVFDTTLQVKKAFFALVANGVRAAPLWESKKQSFVGMLTITDFINILHRYYKSPMVQIYELEEHKIETWRELYLQETFKPLVNISPDASLLDAVYSLIKNKIHRLPVIDPISGNALYILTHKRILKFLQLFMSDMPKPAFMKQNLDELGIGTYHNIAFIHPDTPIIKALNIFVERRISALPVVDESGKVVDIYSKFDVINLAAEKTYNNLDITVTQALQHRSQYFEGVVKCNKLEILETIVDRIVRAEVHRLVVANEADSIVGIISLSDILQALILTPAGAKQKETETE.

Residues 1 to 178 (MPLLDGDLEG…TRPPLASPTH (178 aa)) are disordered. Phosphoserine is present on residues S21, S27, S29, S46, S94, S99, S117, and S118. The segment covering 112–123 (TSGLSSSPSTPT) has biased composition (low complexity). T121 is subject to Phosphothreonine. The segment covering 135 to 145 (SYKHEPERLEN) has biased composition (basic and acidic residues). Residues 148 to 168 (YASSSPPDTGQRFCPSSFQSP) are compositionally biased toward polar residues. Phosphoserine is present on S152. CBS domains are found at residues 230–290 (PTSS…KSPM), 312–370 (TFKP…MSDM), and 385–447 (IGTY…NLDI). ADP is bound by residues R257, 272–277 (MLTITD), V317, 338–339 (HR), and K357. Residues R257, 272–277 (MLTITD), V317, H338, 338–339 (HR), K357, T387, A392, 413–414 (SA), 429–432 (SKFD), R456, H485, 485–486 (HR), and 501–504 (SLSD) contribute to the AMP site. ATP-binding positions include R257, 272–277 (MLTITD), V317, 338–339 (HR), R339, and K357. An AMPK pseudosubstrate motif is present at residues 325-346 (LLDAVYSLIKNKIHRLPVIDPI). ADP-binding positions include 429–432 (SKFD), R456, and 485–486 (HR). Residues 429 to 432 (SKFD), R456, and 485 to 486 (HR) each bind ATP. Residues 459–517 (YFEGVVKCNKLEILETIVDRIVRAEVHRLVVANEADSIVGIISLSDILQALILTPAGAK) form the CBS 4 domain.

It belongs to the 5'-AMP-activated protein kinase gamma subunit family. AMPK is a heterotrimer of an alpha catalytic subunit (PRKAA1 or PRKAA2), a beta (PRKAB1 or PRKAB2) and a gamma non-catalytic subunits (PRKAG1, PRKAG2 or PRKAG3). Interacts with FNIP1 and FNIP2. Post-translationally, phosphorylated by ULK1; leading to negatively regulate AMPK activity and suggesting the existence of a regulatory feedback loop between ULK1 and AMPK. Glycosylated; O-GlcNAcylated by OGT, promoting the AMP-activated protein kinase (AMPK) activity.

In terms of biological role, AMP/ATP-binding subunit of AMP-activated protein kinase (AMPK), an energy sensor protein kinase that plays a key role in regulating cellular energy metabolism. In response to reduction of intracellular ATP levels, AMPK activates energy-producing pathways and inhibits energy-consuming processes: inhibits protein, carbohydrate and lipid biosynthesis, as well as cell growth and proliferation. AMPK acts via direct phosphorylation of metabolic enzymes, and by longer-term effects via phosphorylation of transcription regulators. Also acts as a regulator of cellular polarity by remodeling the actin cytoskeleton; probably by indirectly activating myosin. Gamma non-catalytic subunit mediates binding to AMP, ADP and ATP, leading to activate or inhibit AMPK: AMP-binding results in allosteric activation of alpha catalytic subunit (PRKAA1 or PRKAA2) both by inducing phosphorylation and preventing dephosphorylation of catalytic subunits. ADP also stimulates phosphorylation, without stimulating already phosphorylated catalytic subunit. ATP promotes dephosphorylation of catalytic subunit, rendering the AMPK enzyme inactive. This Pongo abelii (Sumatran orangutan) protein is 5'-AMP-activated protein kinase subunit gamma-2 (PRKAG2).